The following is a 384-amino-acid chain: MSKRRVVVGMSGGVDSSVTAWLLKEQGYDVVGLFMKNWEDDDDGEYCSTRQDWIDVVSVADLIGIDVEAVNFAAEYKDRVFAEFLREYSAGRTPNPDVLCNAEIKFKAFLDHAMSLDAEMIATGHYARVRERDGRFELLKAFDHTKDQSYFLHRLNQAQLSKTMFPLGEMPKTKVREIAAQIGLPNAKKKDSTGICFIGERPFRDFLNRYLPTKPGPMKTPDGKRVGEHIGLAFYTFGQRKGIGLGGSKDGSGEPWFVAAKDIPSNTLYVVQGHDHPWLLSHELVAGNVSWVAGEPPADGFACGAKTRYRQADAACRFGAAAAGPAGEARFTLAFDDAQWAVTPGQSAVLYDGEICLGGGIIEHAASGRDAAAAAPAAALVEAR.

ATP-binding positions include G9–S16 and M35. The segment at N95–D97 is interaction with target base in tRNA. The active-site Nucleophile is C100. A disulfide bridge links C100 with C196. G124 provides a ligand contact to ATP. The interaction with tRNA stretch occupies residues K146–Q148. Catalysis depends on C196, which acts as the Cysteine persulfide intermediate. The tract at residues R308–Y309 is interaction with tRNA.

This sequence belongs to the MnmA/TRMU family.

It is found in the cytoplasm. The catalysed reaction is S-sulfanyl-L-cysteinyl-[protein] + uridine(34) in tRNA + AH2 + ATP = 2-thiouridine(34) in tRNA + L-cysteinyl-[protein] + A + AMP + diphosphate + H(+). Catalyzes the 2-thiolation of uridine at the wobble position (U34) of tRNA, leading to the formation of s(2)U34. The polypeptide is tRNA-specific 2-thiouridylase MnmA (Burkholderia vietnamiensis (strain G4 / LMG 22486) (Burkholderia cepacia (strain R1808))).